The primary structure comprises 269 residues: Formamidopyrimidine-DNA glycosylase (269 aa).

The active-site Schiff-base intermediate with DNA is P2. E3 serves as the catalytic Proton donor. The Proton donor; for beta-elimination activity role is filled by K57. Residues H90, R109, and K150 each contribute to the DNA site. An FPG-type zinc finger spans residues 235 to 269; sequence QVYGRKGEPCRVCGTPIVATKHAQRATFYCRQCQK. R259 acts as the Proton donor; for delta-elimination activity in catalysis.

The protein belongs to the FPG family. In terms of assembly, monomer. Zn(2+) serves as cofactor.

It catalyses the reaction Hydrolysis of DNA containing ring-opened 7-methylguanine residues, releasing 2,6-diamino-4-hydroxy-5-(N-methyl)formamidopyrimidine.. It carries out the reaction 2'-deoxyribonucleotide-(2'-deoxyribose 5'-phosphate)-2'-deoxyribonucleotide-DNA = a 3'-end 2'-deoxyribonucleotide-(2,3-dehydro-2,3-deoxyribose 5'-phosphate)-DNA + a 5'-end 5'-phospho-2'-deoxyribonucleoside-DNA + H(+). Functionally, involved in base excision repair of DNA damaged by oxidation or by mutagenic agents. Acts as a DNA glycosylase that recognizes and removes damaged bases. Has a preference for oxidized purines, such as 7,8-dihydro-8-oxoguanine (8-oxoG). Has AP (apurinic/apyrimidinic) lyase activity and introduces nicks in the DNA strand. Cleaves the DNA backbone by beta-delta elimination to generate a single-strand break at the site of the removed base with both 3'- and 5'-phosphates. The polypeptide is Formamidopyrimidine-DNA glycosylase (Escherichia coli O6:H1 (strain CFT073 / ATCC 700928 / UPEC)).